We begin with the raw amino-acid sequence, 547 residues long: Chaperonin GroEL (547 aa).

ATP contacts are provided by residues 29–32, Lys50, 86–90, Gly414, and Asp495; these read TLGP and DGTTT. Residues 525–547 form a disordered region; that stretch reads PSDKEDSIPPMRGGMGGMGGMDF. The segment covering 537–547 has biased composition (gly residues); that stretch reads GGMGGMGGMDF.

The protein belongs to the chaperonin (HSP60) family. In terms of assembly, forms a cylinder of 14 subunits composed of two heptameric rings stacked back-to-back. Interacts with the co-chaperonin GroES.

Its subcellular location is the cytoplasm. The catalysed reaction is ATP + H2O + a folded polypeptide = ADP + phosphate + an unfolded polypeptide.. Together with its co-chaperonin GroES, plays an essential role in assisting protein folding. The GroEL-GroES system forms a nano-cage that allows encapsulation of the non-native substrate proteins and provides a physical environment optimized to promote and accelerate protein folding. The polypeptide is Chaperonin GroEL (Rickettsia felis (strain ATCC VR-1525 / URRWXCal2) (Rickettsia azadi)).